Reading from the N-terminus, the 713-residue chain is Phosphoribosylformylglycinamidine synthase subunit PurL (713 aa).

The segment covering 1 to 17 (MSLSPSDRELVTEELGR) has biased composition (basic and acidic residues). Residues 1 to 20 (MSLSPSDRELVTEELGREPT) are disordered. The active site involves H34. Y37 contacts ATP. Position 85 (E85) interacts with Mg(2+). Substrate contacts are provided by residues 86–89 (SHNH) and R108. H87 serves as the catalytic Proton acceptor. D109 lines the Mg(2+) pocket. Q233 contacts substrate. D261 contacts Mg(2+). 305 to 307 (ESQ) lines the substrate pocket. The ATP site is built by D480 and G517. A Mg(2+)-binding site is contributed by N518. S520 contacts substrate.

This sequence belongs to the FGAMS family. As to quaternary structure, monomer. Part of the FGAM synthase complex composed of 1 PurL, 1 PurQ and 2 PurS subunits.

The protein resides in the cytoplasm. It carries out the reaction N(2)-formyl-N(1)-(5-phospho-beta-D-ribosyl)glycinamide + L-glutamine + ATP + H2O = 2-formamido-N(1)-(5-O-phospho-beta-D-ribosyl)acetamidine + L-glutamate + ADP + phosphate + H(+). The protein operates within purine metabolism; IMP biosynthesis via de novo pathway; 5-amino-1-(5-phospho-D-ribosyl)imidazole from N(2)-formyl-N(1)-(5-phospho-D-ribosyl)glycinamide: step 1/2. Part of the phosphoribosylformylglycinamidine synthase complex involved in the purines biosynthetic pathway. Catalyzes the ATP-dependent conversion of formylglycinamide ribonucleotide (FGAR) and glutamine to yield formylglycinamidine ribonucleotide (FGAM) and glutamate. The FGAM synthase complex is composed of three subunits. PurQ produces an ammonia molecule by converting glutamine to glutamate. PurL transfers the ammonia molecule to FGAR to form FGAM in an ATP-dependent manner. PurS interacts with PurQ and PurL and is thought to assist in the transfer of the ammonia molecule from PurQ to PurL. The protein is Phosphoribosylformylglycinamidine synthase subunit PurL of Natronomonas pharaonis (strain ATCC 35678 / DSM 2160 / CIP 103997 / JCM 8858 / NBRC 14720 / NCIMB 2260 / Gabara) (Halobacterium pharaonis).